The sequence spans 1299 residues: DNA-directed RNA polymerase subunit beta' (1299 aa).

Positions 60, 62, 75, and 78 each coordinate Zn(2+). Residues 188–209 (GAKSDQKRRAKDGAEKEMGQTR) form a disordered region. Residues D535, D537, and D539 each coordinate Mg(2+). C882, C959, C966, and C969 together coordinate Zn(2+).

The protein belongs to the RNA polymerase beta' chain family. In terms of assembly, the RNAP catalytic core consists of 2 alpha, 1 beta, 1 beta' and 1 omega subunit. When a sigma factor is associated with the core the holoenzyme is formed, which can initiate transcription. The cofactor is Mg(2+). Zn(2+) serves as cofactor.

It carries out the reaction RNA(n) + a ribonucleoside 5'-triphosphate = RNA(n+1) + diphosphate. Functionally, DNA-dependent RNA polymerase catalyzes the transcription of DNA into RNA using the four ribonucleoside triphosphates as substrates. This Clavibacter michiganensis subsp. michiganensis (strain NCPPB 382) protein is DNA-directed RNA polymerase subunit beta'.